Here is a 209-residue protein sequence, read N- to C-terminus: 2-phospho-L-lactate guanylyltransferase (209 aa).

The protein belongs to the CofC family. Homodimer.

The enzyme catalyses (2S)-2-phospholactate + GTP + H(+) = (2S)-lactyl-2-diphospho-5'-guanosine + diphosphate. The protein operates within cofactor biosynthesis; coenzyme F420 biosynthesis. In terms of biological role, guanylyltransferase that catalyzes the activation of (2S)-2-phospholactate (2-PL) as (2S)-lactyl-2-diphospho-5'-guanosine, via the condensation of 2-PL with GTP. It is involved in the biosynthesis of coenzyme F420, a hydride carrier cofactor. In Methanosphaerula palustris (strain ATCC BAA-1556 / DSM 19958 / E1-9c), this protein is 2-phospho-L-lactate guanylyltransferase.